A 197-amino-acid polypeptide reads, in one-letter code: Cytochrome c-L (197 aa).

The signal sequence occupies residues 1–25; that stretch reads MMNRVKIGTALLGLTLAGIALPALA. Heme c-binding residues include Cys90, Cys93, and His94.

Binds 1 heme c group covalently per subunit.

The protein localises to the periplasm. In terms of biological role, electron acceptor for MDH. Acts in methanol oxidation. The sequence is that of Cytochrome c-L (moxG) from Methylorubrum extorquens (strain ATCC 14718 / DSM 1338 / JCM 2805 / NCIMB 9133 / AM1) (Methylobacterium extorquens).